Reading from the N-terminus, the 619-residue chain is Polyadenylate-binding protein 1-like (619 aa).

4 consecutive RRM domains span residues 11-89, 99-175, 191-268, and 294-370; these read ASLY…WSQR, GNIF…HFKS, TNIY…RAQK, and VNLY…LAQR. Positions 431–458 are disordered; sequence PAPRWTSQPPRPSSAYPPGASMVRPPVV. One can recognise a PABC domain in the interval 533 to 610; sequence QEPLTASMLA…AVAVLQAHQA (78 aa).

It belongs to the polyadenylate-binding protein type-1 family. As to expression, expressed in ovary and testis. Also expressed in pancreas, liver and thymus, and at lower levels in other somatic tissues including brain and lung.

The protein localises to the cytoplasm. In terms of biological role, poly(A)-binding protein involved in oocyte maturation and early embryo development. It is required for cytosolic mRNA polyadenylation and translational activation of maternally stored mRNA in oocytes. This Homo sapiens (Human) protein is Polyadenylate-binding protein 1-like.